A 99-amino-acid polypeptide reads, in one-letter code: MRTLSLLTLLALTAFCLSDLAGAKPSDSESDKAFMSKQEGSKVVNRLRRYLNNGLGAPAPYPDPLEPHREVCELNPNCDELADHIGFQDAYKRIYGTTV.

The signal sequence occupies residues 1-23; that stretch reads MRTLSLLTLLALTAFCLSDLAGA. Positions 24 to 49 are excised as a propeptide; that stretch reads KPSDSESDKAFMSKQEGSKVVNRLRR. Positions 50–96 constitute a Gla domain; that stretch reads YLNNGLGAPAPYPDPLEPHREVCELNPNCDELADHIGFQDAYKRIYG. Position 58 is a hydroxyproline (Pro58). Residues Glu66, Glu70, Glu73, and Asp79 each contribute to the Ca(2+) site. A 4-carboxyglutamate mark is found at Glu66, Glu70, and Glu73. A disulfide bond links Cys72 and Cys78.

This sequence belongs to the osteocalcin/matrix Gla protein family. Post-translationally, gamma-carboxyglutamate residues are formed by vitamin K dependent carboxylation by GGCX. These residues are essential for the binding of calcium. Decarboxylation promotes the hormone activity.

The protein resides in the secreted. The carboxylated form is one of the main organic components of the bone matrix, which constitutes 1-2% of the total bone protein: it acts as a negative regulator of bone formation and is required to limit bone formation without impairing bone resorption or mineralization. The carboxylated form binds strongly to apatite and calcium. In terms of biological role, the uncarboxylated form acts as a hormone secreted by osteoblasts, which regulates different cellular processes, such as energy metabolism, male fertility and brain development. Regulates of energy metabolism by acting as a hormone favoring pancreatic beta-cell proliferation, insulin secretion and sensitivity and energy expenditure. Uncarboxylated osteocalcin hormone also promotes testosterone production in the testes: acts as a ligand for G protein-coupled receptor GPRC6A at the surface of Leydig cells, initiating a signaling response that promotes the expression of enzymes required for testosterone synthesis in a CREB-dependent manner. Also acts as a regulator of brain development: osteocalcin hormone crosses the blood-brain barrier and acts as a ligand for GPR158 on neurons, initiating a signaling response that prevents neuronal apoptosis in the hippocampus, favors the synthesis of all monoamine neurotransmitters and inhibits that of gamma-aminobutyric acid (GABA). Osteocalcin also crosses the placenta during pregnancy and maternal osteocalcin is required for fetal brain development. This Rattus norvegicus (Rat) protein is Osteocalcin (Bglap).